The following is a 397-amino-acid chain: MSALTLTASKNTQTMTLDLPLLGSALALAAIGLIMVTSASVDFADDANGQALYYMWRHLTYLLAGVAVGFVILRLPLEWWHKQSWLLLVVALGFLVAVLIPGIGRTVNGSTRWISLGVINIQASEIAKVCLAIYTASYLVRRLDEVRGSWWGFAKPLLVLMLVALLLLMEPDFGALVVTMCAVVGMIFLSGVALSRFAALLMFCVGSVALLAVSQPYRLKRLTAYTDPWADQFDSGYQLTQALIAFGRGEWSGVGLGNSVQKLFYLPEAHTDFVFAIIAEELGLLGSLLIIVLFGVLLWRGMYVSRVAERAGQLFNAYAGYGVTLLLGGQALINLGVNTGLLPTKGLTLPLISYGGSSLIISCLCVAILLRIGSEAVSGEQTEDESPKVKNRGGAQR.

At 1–18 the chain is on the cytoplasmic side; sequence MSALTLTASKNTQTMTLD. Residues 19-39 form a helical membrane-spanning segment; the sequence is LPLLGSALALAAIGLIMVTSA. The Periplasmic portion of the chain corresponds to 40–58; that stretch reads SVDFADDANGQALYYMWRH. A helical transmembrane segment spans residues 59 to 79; it reads LTYLLAGVAVGFVILRLPLEW. The Cytoplasmic segment spans residues 80 to 83; the sequence is WHKQ. The chain crosses the membrane as a helical span at residues 84 to 104; it reads SWLLLVVALGFLVAVLIPGIG. Residues 105–112 are Periplasmic-facing; the sequence is RTVNGSTR. A helical membrane pass occupies residues 113–133; that stretch reads WISLGVINIQASEIAKVCLAI. The Cytoplasmic portion of the chain corresponds to 134–148; sequence YTASYLVRRLDEVRG. A helical membrane pass occupies residues 149–169; sequence SWWGFAKPLLVLMLVALLLLM. The Periplasmic segment spans residues 170-172; it reads EPD. The helical transmembrane segment at 173 to 193 threads the bilayer; the sequence is FGALVVTMCAVVGMIFLSGVA. Residues 194–196 lie on the Cytoplasmic side of the membrane; that stretch reads LSR. The helical transmembrane segment at 197–217 threads the bilayer; the sequence is FAALLMFCVGSVALLAVSQPY. Topologically, residues 218–272 are periplasmic; sequence RLKRLTAYTDPWADQFDSGYQLTQALIAFGRGEWSGVGLGNSVQKLFYLPEAHTD. Residues 273–293 form a helical membrane-spanning segment; the sequence is FVFAIIAEELGLLGSLLIIVL. At 294–316 the chain is on the cytoplasmic side; that stretch reads FGVLLWRGMYVSRVAERAGQLFN. A helical membrane pass occupies residues 317–337; sequence AYAGYGVTLLLGGQALINLGV. At 338 to 348 the chain is on the periplasmic side; sequence NTGLLPTKGLT. The helical transmembrane segment at 349–369 threads the bilayer; the sequence is LPLISYGGSSLIISCLCVAIL. At 370–397 the chain is on the cytoplasmic side; that stretch reads LRIGSEAVSGEQTEDESPKVKNRGGAQR.

It belongs to the SEDS family. FtsW subfamily.

Its subcellular location is the cell inner membrane. It catalyses the reaction [GlcNAc-(1-&gt;4)-Mur2Ac(oyl-L-Ala-gamma-D-Glu-L-Lys-D-Ala-D-Ala)](n)-di-trans,octa-cis-undecaprenyl diphosphate + beta-D-GlcNAc-(1-&gt;4)-Mur2Ac(oyl-L-Ala-gamma-D-Glu-L-Lys-D-Ala-D-Ala)-di-trans,octa-cis-undecaprenyl diphosphate = [GlcNAc-(1-&gt;4)-Mur2Ac(oyl-L-Ala-gamma-D-Glu-L-Lys-D-Ala-D-Ala)](n+1)-di-trans,octa-cis-undecaprenyl diphosphate + di-trans,octa-cis-undecaprenyl diphosphate + H(+). It functions in the pathway cell wall biogenesis; peptidoglycan biosynthesis. Its function is as follows. Peptidoglycan polymerase that is essential for cell division. This is Probable peptidoglycan glycosyltransferase FtsW from Hahella chejuensis (strain KCTC 2396).